A 345-amino-acid polypeptide reads, in one-letter code: Pectin lyase (345 aa).

Positions 1–24 are cleaved as a signal peptide; sequence MKRFCLWFAVFSLLLVLLPGKAFG. Arg-234 is an active-site residue.

This sequence belongs to the polysaccharide lyase 1 family.

Its subcellular location is the secreted. It carries out the reaction Eliminative cleavage of (1-&gt;4)-alpha-D-galacturonan methyl ester to give oligosaccharides with 4-deoxy-6-O-methyl-alpha-D-galact-4-enuronosyl groups at their non-reducing ends.. With respect to regulation, inhibited by Hg(2+) and Mn(2+). Not affected by EDTA in vitro. Its function is as follows. Catalyzes the depolymerization of pectins of methyl esterification degree from 13 to 75%, with an endo mode of action. Cannot degrade polygalacturonate. Also displays protopectinase activity, i.e. releases pectin from protopectin. The protein is Pectin lyase (pelB) of Bacillus subtilis.